The sequence spans 323 residues: Methenyltetrahydromethanopterin cyclohydrolase (323 aa).

The protein belongs to the MCH family.

It is found in the cytoplasm. The catalysed reaction is 5,10-methenyl-5,6,7,8-tetrahydromethanopterin + H2O = N(5)-formyl-5,6,7,8-tetrahydromethanopterin + H(+). It functions in the pathway one-carbon metabolism; methanogenesis from CO(2); 5,10-methenyl-5,6,7,8-tetrahydromethanopterin from CO(2): step 3/3. In terms of biological role, catalyzes the reversible interconversion of 5-formyl-H(4)MPT to methenyl-H(4)MPT(+). This Methanococcus maripaludis (strain C7 / ATCC BAA-1331) protein is Methenyltetrahydromethanopterin cyclohydrolase.